Consider the following 195-residue polypeptide: Dihydroneopterin triphosphate diphosphatase (195 aa).

Asp73 (proton acceptor) is an active-site residue.

It belongs to the HAM1 NTPase family. Mn(2+) is required as a cofactor.

It carries out the reaction 7,8-dihydroneopterin 3'-triphosphate + H2O = 7,8-dihydroneopterin 3'-phosphate + diphosphate + H(+). Its pathway is cofactor biosynthesis; tetrahydrofolate biosynthesis. Its function is as follows. Pyrophosphatase involved in the biosynthesis of tetrahydrofolate. Catalyzes the hydrolysis of dihydroneopterin triphosphate (DHNTP) to dihydroneopterin monophosphate (DHNMP) and pyrophosphate. Shows a strict substrate specificity. Has only weak activity with GTP, ITP, XTP and dTTP, and cannot use ATP, UTP, CTP, NAD(+), NADH, diadenosine triphosphate, diadenosine tetraphosphate, ADP-ribose and UDP-glucose. This is Dihydroneopterin triphosphate diphosphatase from Limosilactobacillus reuteri (strain DSM 20016) (Lactobacillus reuteri).